Here is a 77-residue protein sequence, read N- to C-terminus: Distinctin-like peptide (77 aa).

The signal sequence occupies residues 1–19 (LKKSLFLVTFLALVPLFLC). A propeptide spanning residues 20 to 39 (EEEKREEENEERQDDDQSEE) is cleaved from the precursor.

This sequence belongs to the frog skin active peptide (FSAP) family. Expressed by the skin glands.

The protein localises to the secreted. Functionally, has antimicrobial activity. The protein is Distinctin-like peptide of Pithecopus azureus (Orange-legged monkey tree frog).